Reading from the N-terminus, the 273-residue chain is 4-hydroxy-tetrahydrodipicolinate reductase (273 aa).

Residues 12 to 17 and E38 contribute to the NAD(+) site; that span reads GAGGRM. Residue R39 participates in NADP(+) binding. NAD(+) contacts are provided by residues 102-104 and 126-129; these read GTT and AANF. The active-site Proton donor/acceptor is H159. Position 160 (H160) interacts with (S)-2,3,4,5-tetrahydrodipicolinate. K163 (proton donor) is an active-site residue. 169 to 170 contributes to the (S)-2,3,4,5-tetrahydrodipicolinate binding site; the sequence is GT.

It belongs to the DapB family. Homotetramer.

The protein resides in the cytoplasm. It catalyses the reaction (S)-2,3,4,5-tetrahydrodipicolinate + NAD(+) + H2O = (2S,4S)-4-hydroxy-2,3,4,5-tetrahydrodipicolinate + NADH + H(+). The catalysed reaction is (S)-2,3,4,5-tetrahydrodipicolinate + NADP(+) + H2O = (2S,4S)-4-hydroxy-2,3,4,5-tetrahydrodipicolinate + NADPH + H(+). Its pathway is amino-acid biosynthesis; L-lysine biosynthesis via DAP pathway; (S)-tetrahydrodipicolinate from L-aspartate: step 4/4. Functionally, catalyzes the conversion of 4-hydroxy-tetrahydrodipicolinate (HTPA) to tetrahydrodipicolinate. This is 4-hydroxy-tetrahydrodipicolinate reductase from Yersinia pseudotuberculosis serotype O:1b (strain IP 31758).